We begin with the raw amino-acid sequence, 166 residues long: Disulfide bond formation protein B (166 aa).

The Cytoplasmic portion of the chain corresponds to 1-11 (MQSFAFSTRAL). The helical transmembrane segment at 12-28 (FLGLFAVCAGLLGFGLY) threads the bilayer. Over 29 to 46 (LQHAVGLEPCPMCIMQRY) the chain is Periplasmic. Cys38 and Cys41 are joined by a disulfide. A helical membrane pass occupies residues 47 to 63 (AFVAIALTALVAGLHGP). The Cytoplasmic portion of the chain corresponds to 64–70 (GRRGTRA). The helical transmembrane segment at 71–87 (YAAVILLLALAGGGVAL) threads the bilayer. The Periplasmic segment spans residues 88-143 (RQTWMQLYPPEFAECGPDLEFMLGSFPLADALPMIFQGAGDCSKVDWAFLGLSIAN). Residues Cys102 and Cys129 are joined by a disulfide bond. A helical membrane pass occupies residues 144–162 (WSLVCLTLVAVFAIMMIAR). Residues 163-166 (KRGG) lie on the Cytoplasmic side of the membrane.

It belongs to the DsbB family.

Its subcellular location is the cell inner membrane. Functionally, required for disulfide bond formation in some periplasmic proteins. Acts by oxidizing the DsbA protein. The polypeptide is Disulfide bond formation protein B (Aromatoleum aromaticum (strain DSM 19018 / LMG 30748 / EbN1) (Azoarcus sp. (strain EbN1))).